The chain runs to 126 residues: Aspartate 1-decarboxylase (126 aa).

Serine 25 (schiff-base intermediate with substrate; via pyruvic acid) is an active-site residue. The residue at position 25 (serine 25) is a Pyruvic acid (Ser). Threonine 57 provides a ligand contact to substrate. The Proton donor role is filled by tyrosine 58. 73 to 75 (GAA) serves as a coordination point for substrate.

This sequence belongs to the PanD family. Heterooctamer of four alpha and four beta subunits. Pyruvate serves as cofactor. Post-translationally, is synthesized initially as an inactive proenzyme, which is activated by self-cleavage at a specific serine bond to produce a beta-subunit with a hydroxyl group at its C-terminus and an alpha-subunit with a pyruvoyl group at its N-terminus.

Its subcellular location is the cytoplasm. It carries out the reaction L-aspartate + H(+) = beta-alanine + CO2. It participates in cofactor biosynthesis; (R)-pantothenate biosynthesis; beta-alanine from L-aspartate: step 1/1. In terms of biological role, catalyzes the pyruvoyl-dependent decarboxylation of aspartate to produce beta-alanine. The sequence is that of Aspartate 1-decarboxylase from Acetivibrio thermocellus (strain ATCC 27405 / DSM 1237 / JCM 9322 / NBRC 103400 / NCIMB 10682 / NRRL B-4536 / VPI 7372) (Clostridium thermocellum).